Here is a 345-residue protein sequence, read N- to C-terminus: MGSNSSPPAVLQLCYENVNGSCVKTPYSPGPRVLLYAVFGFGAVLAVFGNLLVMISILHFKQLHSPTNFLIASLACADFWVGVSVMPFSMVRSIESCWYFGRSFCTFHTCCDVAFCYSSLFHLSFISIDRYIAVTDPLVYPTKFTVSVSGICISISWILPLAYSGAVFYTGVYADGLEEVSDAVNCVGGCQVVVNQNWVLIDFLSFLIPTLVMIILYGNIFLVARQQAKKIETVGNKAESSSESYKARVARRERKAAKTLGITVVAFMISWLPYSIDSLVDAFMGFITPAYIYEICVWCAYYNSAMNPLIYALFYPWFKKAIKVIMSGQVFKNSSATMNLFSEQI.

The Extracellular portion of the chain corresponds to M1–R32. A glycan (N-linked (GlcNAc...) asparagine) is linked at N19. 2 disulfide bridges follow: C22-C186 and C105-C190. The chain crosses the membrane as a helical span at residues V33 to V53. Over M54–N68 the chain is Cytoplasmic. The chain crosses the membrane as a helical span at residues F69 to S89. At M90–F107 the chain is on the extracellular side. The chain crosses the membrane as a helical span at residues H108–I128. The Cytoplasmic segment spans residues D129–S147. Residues V148–F168 form a helical membrane-spanning segment. Topologically, residues Y169–D202 are extracellular. A helical membrane pass occupies residues F203–V223. The Cytoplasmic portion of the chain corresponds to A224–T259. A helical transmembrane segment spans residues L260–I276. Over D277–A282 the chain is Extracellular. The helical transmembrane segment at F283–Y302 threads the bilayer. Residues N303–I345 are Cytoplasmic-facing.

This sequence belongs to the G-protein coupled receptor 1 family.

It localises to the cell membrane. Olfactory receptor specific for trace amines, such as beta-phenylethylamine (beta-PEA). Trace amine compounds are enriched in animal body fluids and act on trace amine-associated receptors (TAARs) to elicit both intraspecific and interspecific innate behaviors. Beta-PEA-binding causes a conformation change that triggers signaling via G(s)-class of G alpha proteins (GNAL or GNAS). This chain is Trace amine-associated receptor 6 (Taar6), found in Rattus norvegicus (Rat).